A 512-amino-acid chain; its full sequence is ETS translocation variant 3 (512 aa).

A DNA-binding region (ETS) is located at residues 35 to 116 (IQLWHFILEL…KGKRFTYKFN (82 aa)). The interval 138–196 (QSAPPVPTASSRFHFPPLDTHSPTSDVQPGRFSASSLTASGQESSNGTDRKAELSXLED) is disordered. Serine 139, serine 159, and serine 315 each carry phosphoserine. The segment covering 158–184 (HSPTSDVQPGRFSASSLTASGQESSNG) has biased composition (polar residues). A disordered region spans residues 341–512 (QFSIKLQPPP…QGLATAAADA (172 aa)). Over residues 380–406 (IKVEPASEKDAESLRQSAREKEEHTXE) the composition is skewed to basic and acidic residues. Lysine 381 participates in a covalent cross-link: Glycyl lysine isopeptide (Lys-Gly) (interchain with G-Cter in SUMO2). Lysine 388 is modified (N6-acetyllysine; alternate). Residue lysine 388 forms a Glycyl lysine isopeptide (Lys-Gly) (interchain with G-Cter in SUMO2); alternate linkage. Over residues 443 to 452 (EPLEVTEDIE) the composition is skewed to acidic residues. Basic and acidic residues-rich tracts occupy residues 453-468 (DRPG…KEDA) and 479-491 (RWND…ELSK).

This sequence belongs to the ETS family.

The protein localises to the nucleus. Functionally, transcriptional repressor that contribute to growth arrest during terminal macrophage differentiation by repressing target genes involved in Ras-dependent proliferation. Represses MMP1 promoter activity. This is ETS translocation variant 3 (ETV3) from Ateles geoffroyi (Black-handed spider monkey).